We begin with the raw amino-acid sequence, 107 residues long: UPF0145 protein PM1668 (107 aa).

The protein belongs to the UPF0145 family.

The polypeptide is UPF0145 protein PM1668 (Pasteurella multocida (strain Pm70)).